The primary structure comprises 943 residues: U3 small nucleolar RNA-associated protein 12 (943 aa).

WD repeat units lie at residues 77–107 (AKPAECTYLEAHKDTDLLAVGYADGVIKVWD), 119–149 (GHKAAITLLQFDGTGTRLISGSKDSNIIVWD), 161–190 (SHKDSITGFWCQGEDWLISTSKDGMIKLWD), 202–230 (AHTGECWGLAVKDDLLITTGTDSQVKIWK), 389–418 (GQRTDVRSIDISDDNKLLATASNGSLKIWN), 428–458 (FECGYALTCKFLPGGLLVILGTRNGELQLFD), 471–501 (AHDAAIWSLDLTSDGKRLVTGSADKTVKFWD), 571–601 (GHKLPVLSIDISFDSKMIITSSADKNIKIWG), 613–643 (AHQDSIMNVKFLPQSHNFFSCSKDAVVKYWD), and 655–685 (AHQSEVWALAVATDGGFVVSSSHDHSIRIWE). The tract at residues 715 to 739 (EGNGDDAFKADASGEGVEDEASGVH) is disordered.

The protein belongs to the WD repeat WDR3/UTP12 family. In terms of assembly, interacts with snoRNA U3. Interacts with MPP10. Component of the ribosomal small subunit (SSU) processome composed of at least 40 protein subunits and snoRNA U3.

It localises to the nucleus. The protein localises to the nucleolus. Its function is as follows. Involved in nucleolar processing of pre-18S ribosomal RNA. The chain is U3 small nucleolar RNA-associated protein 12 (DIP2) from Saccharomyces cerevisiae (strain ATCC 204508 / S288c) (Baker's yeast).